Reading from the N-terminus, the 586-residue chain is Asparagine synthetase [glutamine-hydrolyzing] (586 aa).

The active-site For GATase activity is the C2. One can recognise a Glutamine amidotransferase type-2 domain in the interval 2–185 (CGILAVLGCS…PGHLYSSKSG (184 aa)). L-glutamine is bound by residues 50 to 54 (RLAII), 75 to 77 (NGE), and D98. Residues 194–517 (PPWFNESVPS…PQNSARLTVP (324 aa)) enclose the Asparagine synthetase domain. ATP is bound by residues L232, V268, and 342–343 (SG).

Belongs to the asparagine synthetase family.

It carries out the reaction L-aspartate + L-glutamine + ATP + H2O = L-asparagine + L-glutamate + AMP + diphosphate + H(+). It participates in amino-acid biosynthesis; L-asparagine biosynthesis; L-asparagine from L-aspartate (L-Gln route): step 1/1. The sequence is that of Asparagine synthetase [glutamine-hydrolyzing] from Brassica oleracea (Wild cabbage).